A 212-amino-acid polypeptide reads, in one-letter code: Uracil phosphoribosyltransferase (212 aa).

5-phospho-alpha-D-ribose 1-diphosphate-binding positions include arginine 78, arginine 103, and 130 to 138 (DPMLATGGS). Residues isoleucine 193 and 198-200 (GDA) each bind uracil. Aspartate 199 contacts 5-phospho-alpha-D-ribose 1-diphosphate.

Belongs to the UPRTase family. Requires Mg(2+) as cofactor.

It carries out the reaction UMP + diphosphate = 5-phospho-alpha-D-ribose 1-diphosphate + uracil. It participates in pyrimidine metabolism; UMP biosynthesis via salvage pathway; UMP from uracil: step 1/1. Allosterically activated by GTP. Its function is as follows. Catalyzes the conversion of uracil and 5-phospho-alpha-D-ribose 1-diphosphate (PRPP) to UMP and diphosphate. In Pseudomonas aeruginosa (strain LESB58), this protein is Uracil phosphoribosyltransferase.